The primary structure comprises 781 residues: Potassium transporter 5 (781 aa).

Positions 1 to 11 (MTEPLHTSSNG) are enriched in polar residues. Residues 1 to 24 (MTEPLHTSSNGGAERGPNAAFESE) are disordered. At 1–63 (MTEPLHTSSN…AKVGWATTLH (63 aa)) the chain is on the cytoplasmic side. A helical transmembrane segment spans residues 64–84 (LAFQSIGVVYGDMGTSPLYVF). Residues 85-100 (SSTFTNGIKDTNDILG) are Extracellular-facing. Residues 101-121 (VMSLIIYTVVLLPLIKYCFIV) traverse the membrane as a helical segment. Over 122-187 (LRANDNGDGG…EKMENSPNFK (66 aa)) the chain is Cytoplasmic. A helical transmembrane segment spans residues 188–208 (IILFLVTILATSMVIGDGVLT). Residues 209–225 (PCISVLSAVGGIKESAK) lie on the Extracellular side of the membrane. The helical transmembrane segment at 226-246 (SLTQGQIAGIAIAILIVLFLV) threads the bilayer. Over 247–257 (QRFGTDKVGYS) the chain is Cytoplasmic. A helical transmembrane segment spans residues 258-278 (FGPIILTWFIFIAGTGVYNLF). Topologically, residues 279 to 304 (KHDTGVLKAFNPKYIVDYFERNGKQG) are extracellular. A helical transmembrane segment spans residues 305–325 (WISLGGVILCITGTEAMFADL). The Cytoplasmic portion of the chain corresponds to 326 to 334 (GHFNVRAIQ). The helical transmembrane segment at 335–355 (IGFSVVLLPSVLLAYIGQAAY) threads the bilayer. At 356 to 381 (LRIYPEHVADTFYKSIPDPLYWPTFV) the chain is on the extracellular side. The helical transmembrane segment at 382 to 402 (VAVAAAIIASQAMISGAFAII) threads the bilayer. Residues 403 to 426 (AQSQILGCFPRVRVIHTSTKFHGQ) lie on the Cytoplasmic side of the membrane. The chain crosses the membrane as a helical span at residues 427–447 (VYIPEINYVLMVLCVAVTAIF). Topologically, residues 448–458 (QTTDKIGNAYG) are extracellular. A helical membrane pass occupies residues 459–479 (IAVVFVMFITTLLVTLVMVMI). Over 480–481 (WK) the chain is Cytoplasmic. Residues 482–502 (TSLLWIALFPVIFGGAELIYL) form a helical membrane-spanning segment. Residues 503–512 (SSAFYKFTQG) lie on the Extracellular side of the membrane. The helical transmembrane segment at 513–533 (GYLPLVFSAILMFIMATWHYV) threads the bilayer. Residues 534 to 781 (HVHRYKYELR…LLRVGMTYEI (248 aa)) are Cytoplasmic-facing. Positions 681-707 (VTDPTSEVQDAMSSRNNSDQHTTEPRN) are disordered. Residues 683-700 (DPTSEVQDAMSSRNNSDQ) are compositionally biased toward polar residues.

This sequence belongs to the HAK/KUP transporter (TC 2.A.72.3) family. Expressed in root epidermis, parenchyma of stele tissue and primordial of the lateral root, root-shoot junctions and leaf sheaths. Expressed in germinated embryonic tissue, young tillers, flower organs and pedicels.

It is found in the cell membrane. The enzyme catalyses K(+)(in) = K(+)(out). Its function is as follows. High-affinity potassium transporter. Its potassium transporter activity does not seem to be affected by high sodium and low potassium concentrations in the extracellular environment. Invloved in salt stress tolerance by enhancing root potassium uptake and translocation to the shoot to prevent sodium influx during salt stress. Involved in the positive regulation of disease resistance against the rice grassy stunt virus by promoting potassium transport and increasing endogenous plant potassium. The polypeptide is Potassium transporter 5 (HAK5) (Oryza sativa subsp. japonica (Rice)).